We begin with the raw amino-acid sequence, 306 residues long: Putative S-adenosyl-L-methionine-dependent methyltransferase MAV_4442 (306 aa).

Residues D129 and 158–159 each bind S-adenosyl-L-methionine; that span reads DL.

Belongs to the UPF0677 family.

In terms of biological role, exhibits S-adenosyl-L-methionine-dependent methyltransferase activity. This is Putative S-adenosyl-L-methionine-dependent methyltransferase MAV_4442 from Mycobacterium avium (strain 104).